The chain runs to 670 residues: DNA ligase (670 aa).

NAD(+)-binding positions include 34–38 (DAEYD), 84–85 (SL), 116–119 (EHKV), arginine 139, glutamate 174, tyrosine 226, lysine 291, and lysine 315. Lysine 118 acts as the N6-AMP-lysine intermediate in catalysis. 4 residues coordinate Zn(2+): cysteine 409, cysteine 412, cysteine 425, and cysteine 430. Positions 586–670 (EVSDLLSGLT…LKEKGAPVPA (85 aa)) constitute a BRCT domain.

This sequence belongs to the NAD-dependent DNA ligase family. LigA subfamily. Mg(2+) serves as cofactor.

It catalyses the reaction NAD(+) + (deoxyribonucleotide)n-3'-hydroxyl + 5'-phospho-(deoxyribonucleotide)m = (deoxyribonucleotide)n+m + AMP + beta-nicotinamide D-nucleotide.. Functionally, DNA ligase that catalyzes the formation of phosphodiester linkages between 5'-phosphoryl and 3'-hydroxyl groups in double-stranded DNA using NAD as a coenzyme and as the energy source for the reaction. It is essential for DNA replication and repair of damaged DNA. This Thermus filiformis protein is DNA ligase.